We begin with the raw amino-acid sequence, 269 residues long: Ribosomal RNA small subunit methyltransferase A (269 aa).

6 residues coordinate S-adenosyl-L-methionine: Asn18, Leu20, Gly45, Glu66, Asp91, and Asn112.

Belongs to the class I-like SAM-binding methyltransferase superfamily. rRNA adenine N(6)-methyltransferase family. RsmA subfamily.

Its subcellular location is the cytoplasm. The enzyme catalyses adenosine(1518)/adenosine(1519) in 16S rRNA + 4 S-adenosyl-L-methionine = N(6)-dimethyladenosine(1518)/N(6)-dimethyladenosine(1519) in 16S rRNA + 4 S-adenosyl-L-homocysteine + 4 H(+). Specifically dimethylates two adjacent adenosines (A1518 and A1519) in the loop of a conserved hairpin near the 3'-end of 16S rRNA in the 30S particle. May play a critical role in biogenesis of 30S subunits. The chain is Ribosomal RNA small subunit methyltransferase A from Shewanella loihica (strain ATCC BAA-1088 / PV-4).